The primary structure comprises 689 residues: MGKNFLLEIGTEEMPAHFLDPAIKQIYDFSLNYFENQKISFEDIKTWATPRRLVVYIKNLSEKQESQEEEIRGPAAHVGYKNGVWTEVAKRFAEQYGASLEALYIKETPRGKYIFLKRIKEGVNTLEILPDYAVSLLKNIRFPKMMKWGNVDFYFGRPIRWIVALYGSEEVKFEVAGVKSSRYSRPPRFLPQTPIEIKDADSYIDLMKENYVIVDQNERKNEILRHIKEIANSNSLTLSYDEDLLEEVTYLVEYPTALLGQFDSKYLTLPEIVLIVTMEKKQRYFPLRDKEGNLINKFIVIRNGTENYKEVVIQGNEKVLKARLADAEYYYNEDIRCPLEKYSEKLSGIIFQEQLGTIKDKVERVRILVREIANILELSTEEKEILERAVDLYKADLGTLMVSEYPELHGIMGSIYAKISGEREPIPQIIGEYIYPRTLEDQIPKNPLSTVLGIADRVDSLTGYFALDLFPTGSEDPIGLRRISGGLLRLLLETDFKLNLRNLFMKSFEVYKFSDKCPISQIEKGMLFIGQRLRNLLLDKYPNDIVEAVMEVGYDELWKLKRRVDFIREFKEKDPYEKLKRALNRLYRILPKDFSPKEINENLFNSPFEKELYRDYVKINKEISKEILKGNYKVLLGYDFLKEFSDHIESFFDHVLVMSPNEEEKLNRLSLLFAIKSLFWEVLDWSKLN.

It belongs to the class-II aminoacyl-tRNA synthetase family. As to quaternary structure, tetramer of two alpha and two beta subunits.

The protein resides in the cytoplasm. The enzyme catalyses tRNA(Gly) + glycine + ATP = glycyl-tRNA(Gly) + AMP + diphosphate. In Dictyoglomus turgidum (strain DSM 6724 / Z-1310), this protein is Glycine--tRNA ligase beta subunit.